Here is a 357-residue protein sequence, read N- to C-terminus: Histidine biosynthesis bifunctional protein HisB (357 aa).

Positions 1–168 (MTPILFIDRD…GIAHALADAP (168 aa)) are histidinol-phosphatase. The Nucleophile role is filled by D8. D8, D10, and D128 together coordinate Mg(2+). Catalysis depends on D10, which acts as the Proton donor. The tract at residues 169 to 357 (RIAVVQRDTK…TALPTTKGAL (189 aa)) is imidazoleglycerol-phosphate dehydratase.

It in the N-terminal section; belongs to the histidinol-phosphatase family. The protein in the C-terminal section; belongs to the imidazoleglycerol-phosphate dehydratase family. Mg(2+) is required as a cofactor.

Its subcellular location is the cytoplasm. It catalyses the reaction D-erythro-1-(imidazol-4-yl)glycerol 3-phosphate = 3-(imidazol-4-yl)-2-oxopropyl phosphate + H2O. The catalysed reaction is L-histidinol phosphate + H2O = L-histidinol + phosphate. The protein operates within amino-acid biosynthesis; L-histidine biosynthesis; L-histidine from 5-phospho-alpha-D-ribose 1-diphosphate: step 6/9. It participates in amino-acid biosynthesis; L-histidine biosynthesis; L-histidine from 5-phospho-alpha-D-ribose 1-diphosphate: step 8/9. This Stenotrophomonas maltophilia (strain R551-3) protein is Histidine biosynthesis bifunctional protein HisB.